Reading from the N-terminus, the 152-residue chain is Small ribosomal subunit protein uS15 (152 aa).

It belongs to the universal ribosomal protein uS15 family. In terms of assembly, part of the 30S ribosomal subunit.

The sequence is that of Small ribosomal subunit protein uS15 from Saccharolobus solfataricus (strain ATCC 35092 / DSM 1617 / JCM 11322 / P2) (Sulfolobus solfataricus).